A 67-amino-acid polypeptide reads, in one-letter code: ATP synthase F(0) complex subunit 8 (67 aa).

The helical transmembrane segment at 8 to 24 threads the bilayer; sequence TWFTTIVAMILSLFILM. At Lys54 the chain carries N6-acetyllysine; alternate. Position 54 is an N6-succinyllysine; alternate (Lys54). At Lys57 the chain carries N6-acetyllysine.

It belongs to the ATPase protein 8 family. As to quaternary structure, component of the ATP synthase complex composed at least of ATP5F1A/subunit alpha, ATP5F1B/subunit beta, ATP5MC1/subunit c (homooctomer), MT-ATP6/subunit a, MT-ATP8/subunit 8, ATP5ME/subunit e, ATP5MF/subunit f, ATP5MG/subunit g, ATP5MK/subunit k, ATP5MJ/subunit j, ATP5F1C/subunit gamma, ATP5F1D/subunit delta, ATP5F1E/subunit epsilon, ATP5PF/subunit F6, ATP5PB/subunit b, ATP5PD/subunit d, ATP5PO/subunit OSCP. ATP synthase complex consists of a soluble F(1) head domain (subunits alpha(3) and beta(3)) - the catalytic core - and a membrane F(0) domain - the membrane proton channel (subunits c, a, 8, e, f, g, k and j). These two domains are linked by a central stalk (subunits gamma, delta, and epsilon) rotating inside the F1 region and a stationary peripheral stalk (subunits F6, b, d, and OSCP). Interacts with PRICKLE3.

The protein localises to the mitochondrion membrane. Its function is as follows. Subunit 8, of the mitochondrial membrane ATP synthase complex (F(1)F(0) ATP synthase or Complex V) that produces ATP from ADP in the presence of a proton gradient across the membrane which is generated by electron transport complexes of the respiratory chain. ATP synthase complex consist of a soluble F(1) head domain - the catalytic core - and a membrane F(1) domain - the membrane proton channel. These two domains are linked by a central stalk rotating inside the F(1) region and a stationary peripheral stalk. During catalysis, ATP synthesis in the catalytic domain of F(1) is coupled via a rotary mechanism of the central stalk subunits to proton translocation. In vivo, can only synthesize ATP although its ATP hydrolase activity can be activated artificially in vitro. Part of the complex F(0) domain. The chain is ATP synthase F(0) complex subunit 8 from Oryctolagus cuniculus (Rabbit).